Here is a 437-residue protein sequence, read N- to C-terminus: Type II methyltransferase M.HgiBI (437 aa).

The 428-residue stretch at 4–431 (FRFIDLFAGI…KALQCVKLFE (428 aa)) folds into the SAM-dependent MTase C5-type domain. The active site involves cysteine 75.

The protein belongs to the class I-like SAM-binding methyltransferase superfamily. C5-methyltransferase family.

The catalysed reaction is a 2'-deoxycytidine in DNA + S-adenosyl-L-methionine = a 5-methyl-2'-deoxycytidine in DNA + S-adenosyl-L-homocysteine + H(+). A methylase that recognizes the double-stranded sequence 5'-GGWCC-3', methylates C-? on both strands, and protects the DNA from cleavage by the HgiBI endonuclease. This system is less active than isoschizomeric RM.HgiEI. The polypeptide is Type II methyltransferase M.HgiBI (Herpetosiphon aurantiacus (Herpetosiphon giganteus)).